The primary structure comprises 269 residues: Sulfur carrier protein FdhD (269 aa).

The Cysteine persulfide intermediate role is filled by Cys-111.

The protein belongs to the FdhD family.

It localises to the cytoplasm. Functionally, required for formate dehydrogenase (FDH) activity. Acts as a sulfur carrier protein that transfers sulfur from IscS to the molybdenum cofactor prior to its insertion into FDH. The chain is Sulfur carrier protein FdhD from Brucella melitensis biotype 1 (strain ATCC 23456 / CCUG 17765 / NCTC 10094 / 16M).